We begin with the raw amino-acid sequence, 278 residues long: MPDSNFGIVLQSLAKQCKVFWNNQIITAFPQKKLQWKNDFKLMVGDRVQLEDGAITKVLARKNELTRPRVANVDQIVLIQSLVQPKINWIQLLKLLVYFNAKLIDEIPILITKTDLDFDPMEKQKLIDLKQFNYQLFFVSKNEPLPSELIDIFSKKLSVFTGQSGVGKSSLINRLDPSLKQKIQALSVNKFGKNTTTKTTLFSFRGGFICDTPGFNVISIKNLKILAAQHFVGFQKMISKCHFSNCYHQYEKDCFVTTSVMKNRYPSWLYEKYRKMIN.

The region spanning 62–218 (KNELTRPRVA…ICDTPGFNVI (157 aa)) is the CP-type G domain. Residues 112-115 (TKTD) and 162-170 (GQSGVGKSS) each bind GTP. Zn(2+) contacts are provided by Cys-241, Cys-246, His-248, and Cys-254.

This sequence belongs to the TRAFAC class YlqF/YawG GTPase family. RsgA subfamily. As to quaternary structure, monomer. Associates with 30S ribosomal subunit, binds 16S rRNA. The cofactor is Zn(2+).

Its subcellular location is the cytoplasm. In terms of biological role, one of several proteins that assist in the late maturation steps of the functional core of the 30S ribosomal subunit. Helps release RbfA from mature subunits. May play a role in the assembly of ribosomal proteins into the subunit. Circularly permuted GTPase that catalyzes slow GTP hydrolysis, GTPase activity is stimulated by the 30S ribosomal subunit. This chain is Small ribosomal subunit biogenesis GTPase RsgA, found in Mycoplasma genitalium (strain ATCC 33530 / DSM 19775 / NCTC 10195 / G37) (Mycoplasmoides genitalium).